A 779-amino-acid chain; its full sequence is Kazrin (779 aa).

Residues 79–261 (AQVLLREEVV…LATLTKDVPK (183 aa)) adopt a coiled-coil conformation. Residues 295-366 (QQTLYHSHPP…PGPVQKSLHN (72 aa)) form a disordered region. Phosphoserine is present on residues Ser-356, Ser-371, and Ser-391. Residues 403-429 (KSLDPGLFDDSDSQCSPTRHSLSLSEG) are disordered. Residues 415–426 (SQCSPTRHSLSL) show a composition bias toward polar residues. 3 SAM domains span residues 450 to 515 (WKAG…YRDA), 528 to 592 (DHHW…LYQV), and 616 to 683 (WTNQ…STIF). Residues 685-779 (PSNSTGIRES…GYGSLEVTNV (95 aa)) are disordered. Residues 736-746 (SSKEPDFHDDY) show a composition bias toward basic and acidic residues.

It belongs to the kazrin family. As to expression, expressed in skin interfollicular epidermis and hair follicles. Expressed in tongue epithelium basal suprabasal layers.

It localises to the cell junction. It is found in the nucleus. The protein localises to the cytoplasm. The protein resides in the cytoskeleton. Its function is as follows. Component of the cornified envelope of keratinocytes. May be involved in the interplay between adherens junctions and desmosomes. The function in the nucleus is not known. The protein is Kazrin (Kazn) of Mus musculus (Mouse).